The chain runs to 124 residues: Small ribosomal subunit protein uS12 (124 aa).

Asp-89 carries the post-translational modification 3-methylthioaspartic acid.

The protein belongs to the universal ribosomal protein uS12 family. In terms of assembly, part of the 30S ribosomal subunit. Contacts proteins S8 and S17. May interact with IF1 in the 30S initiation complex.

In terms of biological role, with S4 and S5 plays an important role in translational accuracy. Functionally, interacts with and stabilizes bases of the 16S rRNA that are involved in tRNA selection in the A site and with the mRNA backbone. Located at the interface of the 30S and 50S subunits, it traverses the body of the 30S subunit contacting proteins on the other side and probably holding the rRNA structure together. The combined cluster of proteins S8, S12 and S17 appears to hold together the shoulder and platform of the 30S subunit. The polypeptide is Small ribosomal subunit protein uS12 (Glaesserella parasuis serovar 5 (strain SH0165) (Haemophilus parasuis)).